Here is a 216-residue protein sequence, read N- to C-terminus: Uracil phosphoribosyltransferase (216 aa).

5-phospho-alpha-D-ribose 1-diphosphate-binding positions include Arg-85, Arg-110, and 135 to 143; that span reads DPMVATGYS. Uracil is bound by residues Ile-200 and 205–207; that span reads GDA. Asp-206 contributes to the 5-phospho-alpha-D-ribose 1-diphosphate binding site.

This sequence belongs to the UPRTase family. It depends on Mg(2+) as a cofactor.

It carries out the reaction UMP + diphosphate = 5-phospho-alpha-D-ribose 1-diphosphate + uracil. The protein operates within pyrimidine metabolism; UMP biosynthesis via salvage pathway; UMP from uracil: step 1/1. With respect to regulation, allosterically activated by GTP. Catalyzes the conversion of uracil and 5-phospho-alpha-D-ribose 1-diphosphate (PRPP) to UMP and diphosphate. The polypeptide is Uracil phosphoribosyltransferase (Paraburkholderia phytofirmans (strain DSM 17436 / LMG 22146 / PsJN) (Burkholderia phytofirmans)).